The following is a 110-amino-acid chain: Large ribosomal subunit protein uL22 (110 aa).

This sequence belongs to the universal ribosomal protein uL22 family. In terms of assembly, part of the 50S ribosomal subunit.

In terms of biological role, this protein binds specifically to 23S rRNA; its binding is stimulated by other ribosomal proteins, e.g. L4, L17, and L20. It is important during the early stages of 50S assembly. It makes multiple contacts with different domains of the 23S rRNA in the assembled 50S subunit and ribosome. The globular domain of the protein is located near the polypeptide exit tunnel on the outside of the subunit, while an extended beta-hairpin is found that lines the wall of the exit tunnel in the center of the 70S ribosome. The polypeptide is Large ribosomal subunit protein uL22 (Cellvibrio japonicus (strain Ueda107) (Pseudomonas fluorescens subsp. cellulosa)).